A 126-amino-acid polypeptide reads, in one-letter code: Large ribosomal subunit protein uL24 (126 aa).

Residues 1–23 are disordered; it reads MKFSRDVTSSRRKQRKAHFGAPS.

This sequence belongs to the universal ribosomal protein uL24 family. As to quaternary structure, component of the large ribosomal subunit (LSU). Mature yeast ribosomes consist of a small (40S) and a large (60S) subunit. The 40S small subunit contains 1 molecule of ribosomal RNA (18S rRNA) and at least 33 different proteins. The large 60S subunit contains 3 rRNA molecules (25S, 5.8S and 5S rRNA) and at least 46 different proteins.

It is found in the cytoplasm. The protein localises to the nucleus. The protein resides in the nucleolus. Its function is as follows. Component of the ribosome, a large ribonucleoprotein complex responsible for the synthesis of proteins in the cell. The small ribosomal subunit (SSU) binds messenger RNAs (mRNAs) and translates the encoded message by selecting cognate aminoacyl-transfer RNA (tRNA) molecules. The large subunit (LSU) contains the ribosomal catalytic site termed the peptidyl transferase center (PTC), which catalyzes the formation of peptide bonds, thereby polymerizing the amino acids delivered by tRNAs into a polypeptide chain. The nascent polypeptides leave the ribosome through a tunnel in the LSU and interact with protein factors that function in enzymatic processing, targeting, and the membrane insertion of nascent chains at the exit of the ribosomal tunnel. This Schizosaccharomyces pombe (strain 972 / ATCC 24843) (Fission yeast) protein is Large ribosomal subunit protein uL24 (rpl26).